Reading from the N-terminus, the 392-residue chain is Protein FAM53C (392 aa).

N-acetylmethionine is present on Met-1. The disordered stretch occupies residues 78-119; it reads LRPPSRGNSPKEQPFSQVLRPEPPDPEKLPVPPAPPSKRHCR. Residues 83 to 93 show a composition bias toward polar residues; the sequence is RGNSPKEQPFS. 6 positions are modified to phosphoserine: Ser-122, Ser-162, Ser-232, Ser-234, Ser-255, and Ser-273. 2 disordered regions span residues 141 to 167 and 204 to 294; these read LWTPIKHRGSGGGGGPQVPHQSPPKRV and RPCA…EDPR. Residues 241–256 are compositionally biased toward low complexity; that stretch reads ASRFLPSARSSPASSP. Over residues 278 to 294 the composition is skewed to basic and acidic residues; it reads LDARKTGVKRRHEEDPR. Ser-299 bears the Phosphoserine mark. Residues 341–364 are disordered; sequence ASCSPTGGSSQVLSESEEEEEGAV.

It belongs to the FAM53 family.

The protein is Protein FAM53C of Homo sapiens (Human).